A 161-amino-acid chain; its full sequence is Nucleotide-binding protein Pcar_0033 (161 aa).

Belongs to the YajQ family.

Functionally, nucleotide-binding protein. This chain is Nucleotide-binding protein Pcar_0033, found in Syntrophotalea carbinolica (strain DSM 2380 / NBRC 103641 / GraBd1) (Pelobacter carbinolicus).